The following is a 230-amino-acid chain: DNA mismatch repair protein MutH (230 aa).

This sequence belongs to the MutH family.

Its subcellular location is the cytoplasm. Functionally, sequence-specific endonuclease that cleaves unmethylated GATC sequences. It is involved in DNA mismatch repair. In Enterobacter sp. (strain 638), this protein is DNA mismatch repair protein MutH.